Here is a 788-residue protein sequence, read N- to C-terminus: Protein translocase subunit SecA 2 (788 aa).

ATP contacts are provided by residues Gln-86, 104–108, and Asp-493; that span reads GEGKT.

Belongs to the SecA family. In terms of assembly, monomer and homodimer. Part of the essential Sec protein translocation apparatus which comprises SecA, SecYEG and auxiliary proteins SecDF. Other proteins may also be involved.

The protein resides in the cell membrane. Its subcellular location is the cytoplasm. The catalysed reaction is ATP + H2O + cellular proteinSide 1 = ADP + phosphate + cellular proteinSide 2.. Functionally, part of the Sec protein translocase complex. Interacts with the SecYEG preprotein conducting channel. Has a central role in coupling the hydrolysis of ATP to the transfer of proteins into and across the cell membrane, serving as an ATP-driven molecular motor driving the stepwise translocation of polypeptide chains across the membrane. The sequence is that of Protein translocase subunit SecA 2 from Bacillus thuringiensis (strain Al Hakam).